Reading from the N-terminus, the 557-residue chain is Kelch repeat and BTB domain-containing protein 2 (557 aa).

One can recognise a BTB domain in the interval 26–95 (CDVIITIRDG…LYNRHISSMN (70 aa)). A BACK domain is found at 143 to 223 (IVKYIKRMLM…CIDIQNLDKK (81 aa)). 3 Kelch repeats span residues 305–352 (EIII…VIDD), 353–399 (TIYA…VLDQ), and 415–464 (SVHA…SHED).

In terms of assembly, interacts (via BTB domain) with host CUL3.

The protein resides in the host cytoplasm. In terms of biological role, probable substrate-specific adapter of CUL3-containing E3 ubiquitin-protein ligases which mediate the ubiquitination and subsequent proteasomal degradation of host target proteins. This is Kelch repeat and BTB domain-containing protein 2 (KBTB2) from Cowpox virus (strain Brighton Red) (CPV).